Here is a 427-residue protein sequence, read N- to C-terminus: Glutamyl-tRNA reductase (427 aa).

Substrate-binding positions include 50–53 (TCNR), Ser-110, 115–117 (ETQ), and Gln-121. The Nucleophile role is filled by Cys-51. 190–195 (GAGEMG) serves as a coordination point for NADP(+).

This sequence belongs to the glutamyl-tRNA reductase family. In terms of assembly, homodimer.

The catalysed reaction is (S)-4-amino-5-oxopentanoate + tRNA(Glu) + NADP(+) = L-glutamyl-tRNA(Glu) + NADPH + H(+). Its pathway is porphyrin-containing compound metabolism; protoporphyrin-IX biosynthesis; 5-aminolevulinate from L-glutamyl-tRNA(Glu): step 1/2. Functionally, catalyzes the NADPH-dependent reduction of glutamyl-tRNA(Glu) to glutamate 1-semialdehyde (GSA). The protein is Glutamyl-tRNA reductase of Campylobacter concisus (strain 13826).